Consider the following 185-residue polypeptide: Ribosome-recycling factor (185 aa).

This sequence belongs to the RRF family.

Its subcellular location is the cytoplasm. Responsible for the release of ribosomes from messenger RNA at the termination of protein biosynthesis. May increase the efficiency of translation by recycling ribosomes from one round of translation to another. The protein is Ribosome-recycling factor of Nocardia farcinica (strain IFM 10152).